A 64-amino-acid chain; its full sequence is Probable cytochrome c oxidase subunit 5C-3 (64 aa).

Residues 15-34 traverse the membrane as a helical segment; sequence SVVKELVIGLTLGLAAGGLW.

This sequence belongs to the cytochrome c oxidase subunit 5C family.

The protein localises to the mitochondrion inner membrane. In terms of biological role, this protein is one of the nuclear-coded polypeptide chains of cytochrome c oxidase, the terminal oxidase in mitochondrial electron transport. The chain is Probable cytochrome c oxidase subunit 5C-3 from Arabidopsis thaliana (Mouse-ear cress).